Consider the following 303-residue polypeptide: MIKQRTLKNIIRATGVGLHSGEKVYLTLKPAPVDTGIVFRRIDLDPVVDIPARAENVGETTMSTTLVKGDVKVDTVEHLLSAMAGLGIDNAYVELSAPEVPIMDGSAGPFVFLIQSAGLQEQEACKRFIRIKREVAVEEDDKRAVFLPFDGFKVSFEIDFDHPVFRGRTQTASIDFSSTSFVKEVSRARTFGFMRDIEFLRSHNLALGGSVDNAIVVDENRVLNEDGLRYEDEFVKHKILDAIGDLYLLGNSLIGEFRGFKSGHALNNRLLRALLEQKDAWEVVTFEDAMSAPISYVRPIAAV.

His78, His237, and Asp241 together coordinate Zn(2+). The active-site Proton donor is the His264.

It belongs to the LpxC family. The cofactor is Zn(2+).

It catalyses the reaction a UDP-3-O-[(3R)-3-hydroxyacyl]-N-acetyl-alpha-D-glucosamine + H2O = a UDP-3-O-[(3R)-3-hydroxyacyl]-alpha-D-glucosamine + acetate. The protein operates within glycolipid biosynthesis; lipid IV(A) biosynthesis; lipid IV(A) from (3R)-3-hydroxytetradecanoyl-[acyl-carrier-protein] and UDP-N-acetyl-alpha-D-glucosamine: step 2/6. Functionally, catalyzes the hydrolysis of UDP-3-O-myristoyl-N-acetylglucosamine to form UDP-3-O-myristoylglucosamine and acetate, the committed step in lipid A biosynthesis. This is UDP-3-O-acyl-N-acetylglucosamine deacetylase from Azotobacter vinelandii (strain DJ / ATCC BAA-1303).